A 450-amino-acid polypeptide reads, in one-letter code: Chromosomal replication initiator protein DnaA (450 aa).

The tract at residues 1–77 is domain I, interacts with DnaA modulators; it reads MTENEQIFWN…EVYNAQIAVD (77 aa). The domain II stretch occupies residues 77-109; the sequence is DYVYEDDLMIEQQHQGQQGYTEQAFQQLPAVQS. The interval 110–328 is domain III, AAA+ region; it reads DLNPKYSFDN…GALKDISLVA (219 aa). ATP-binding residues include glycine 154, glycine 156, lysine 157, and threonine 158. The interval 329 to 450 is domain IV, binds dsDNA; it reads NFKQIDTITV…EIETIKNKIK (122 aa).

This sequence belongs to the DnaA family. Oligomerizes as a right-handed, spiral filament on DNA at oriC.

It is found in the cytoplasm. Its function is as follows. Plays an essential role in the initiation and regulation of chromosomal replication. ATP-DnaA binds to the origin of replication (oriC) to initiate formation of the DNA replication initiation complex once per cell cycle. Binds the DnaA box (a 9 base pair repeat at the origin) and separates the double-stranded (ds)DNA. Forms a right-handed helical filament on oriC DNA; dsDNA binds to the exterior of the filament while single-stranded (ss)DNA is stabiized in the filament's interior. The ATP-DnaA-oriC complex binds and stabilizes one strand of the AT-rich DNA unwinding element (DUE), permitting loading of DNA polymerase. After initiation quickly degrades to an ADP-DnaA complex that is not apt for DNA replication. Binds acidic phospholipids. The sequence is that of Chromosomal replication initiator protein DnaA from Streptococcus equi subsp. equi (strain 4047).